Here is a 368-residue protein sequence, read N- to C-terminus: Glutamate 5-kinase (368 aa).

Residue Lys11 coordinates ATP. Substrate-binding residues include Ser51, Asp138, and Asn150. ATP-binding positions include 170-171 and 212-218; these read TD and TGGMATK. Positions 276 to 354 constitute a PUA domain; that stretch reads AGEIIVDHGA…QQISQILGYE (79 aa).

Belongs to the glutamate 5-kinase family.

The protein localises to the cytoplasm. The enzyme catalyses L-glutamate + ATP = L-glutamyl 5-phosphate + ADP. Its pathway is amino-acid biosynthesis; L-proline biosynthesis; L-glutamate 5-semialdehyde from L-glutamate: step 1/2. Catalyzes the transfer of a phosphate group to glutamate to form L-glutamate 5-phosphate. The sequence is that of Glutamate 5-kinase from Photorhabdus laumondii subsp. laumondii (strain DSM 15139 / CIP 105565 / TT01) (Photorhabdus luminescens subsp. laumondii).